The following is a 340-amino-acid chain: Thermopsin (340 aa).

The first 28 residues, 1–28, serve as a signal peptide directing secretion; it reads MNFKSICLIILLSALIIPYIPQNIYFFP. Positions 29 to 41 are excised as a propeptide; it reads HRNTTGATISSGL. 10 N-linked (GlcNAc...) asparagine glycosylation sites follow: N31, N65, N85, N117, N148, N197, N277, N287, N327, and N334.

This sequence belongs to the peptidase A5 family.

Its subcellular location is the secreted. The enzyme catalyses Specificity similar to pepsin A, prefers bulky hydrophobic side-chains on either side of the scissible bond.. Its function is as follows. May represent a new class of acid proteases. It digests proteins and peptides in acidic solution. This is Thermopsin (thpS) from Sulfolobus acidocaldarius (strain ATCC 33909 / DSM 639 / JCM 8929 / NBRC 15157 / NCIMB 11770).